A 289-amino-acid chain; its full sequence is Protein shisa-2 homolog (289 aa).

The N-terminal stretch at 1–27 (MWAGCHPDAASLLRLLLAALLAAGALA) is a signal peptide. Topologically, residues 28-104 (SGEYCHGWLD…RADKDGPDGS (77 aa)) are extracellular. The segment at 81 to 102 (GCDNDRQQGAGEPGRADKDGPD) is disordered. Residues 105 to 125 (AVPIYVPFLIVGSVFVAFIVL) form a helical membrane-spanning segment. At 126 to 289 (GSLVAACCCR…EQKMYPAVTV (164 aa)) the chain is on the cytoplasmic side. Positions 162 to 198 (PSASTSRGSSSRQSSTAASSSSSANSGARAPPTRSQT) are disordered. A compositionally biased stretch (low complexity) spans 163 to 191 (SASTSRGSSSRQSSTAASSSSSANSGARA).

Belongs to the shisa family.

It is found in the endoplasmic reticulum membrane. Functionally, plays an essential role in the maturation of presomitic mesoderm cells by individual attenuation of both FGF and WNT signaling. This chain is Protein shisa-2 homolog (SHISA2), found in Bos taurus (Bovine).